A 176-amino-acid polypeptide reads, in one-letter code: Tumor necrosis factor receptor superfamily member 23 (176 aa).

A signal peptide spans 1–29 (MVTFSHVSSLSHWFLLLLLLNLFLPVIFA). TNFR-Cys repeat units lie at residues 37-72 (NCPDGEYQSNDVCCKTCPSGTFVKAPCKIPHTQGQC), 74-114 (KCHP…DRKC), and 115-155 (ECQI…NTVC). Cystine bridges form between cysteine 38–cysteine 49, cysteine 50–cysteine 63, cysteine 53–cysteine 72, cysteine 75–cysteine 90, cysteine 93–cysteine 106, cysteine 96–cysteine 114, cysteine 116–cysteine 131, cysteine 134–cysteine 147, and cysteine 137–cysteine 155. N-linked (GlcNAc...) asparagine glycosylation occurs at asparagine 148. A lipid anchor (GPI-anchor amidated cysteine) is attached at cysteine 155. Residues 156–176 (SSSVSNPRNWLFLLMLIVFCI) constitute a propeptide, removed in mature form.

As to expression, ubiquitous.

Its subcellular location is the cell membrane. Functionally, receptor for the cytotoxic ligand TRAIL. Lacks a cytoplasmic death domain and hence is not capable of inducing apoptosis. May protect cells against TRAIL mediated apoptosis through ligand competition. Cannot induce the NF-kappa-B pathway. The polypeptide is Tumor necrosis factor receptor superfamily member 23 (Tnfrsf23) (Mus musculus (Mouse)).